A 297-amino-acid chain; its full sequence is Bifunctional protein FolD (297 aa).

Residues 164–166 (GRS), Ser-193, and Val-234 contribute to the NADP(+) site.

This sequence belongs to the tetrahydrofolate dehydrogenase/cyclohydrolase family. As to quaternary structure, homodimer.

The catalysed reaction is (6R)-5,10-methylene-5,6,7,8-tetrahydrofolate + NADP(+) = (6R)-5,10-methenyltetrahydrofolate + NADPH. It carries out the reaction (6R)-5,10-methenyltetrahydrofolate + H2O = (6R)-10-formyltetrahydrofolate + H(+). It functions in the pathway one-carbon metabolism; tetrahydrofolate interconversion. Catalyzes the oxidation of 5,10-methylenetetrahydrofolate to 5,10-methenyltetrahydrofolate and then the hydrolysis of 5,10-methenyltetrahydrofolate to 10-formyltetrahydrofolate. The protein is Bifunctional protein FolD of Natronomonas pharaonis (strain ATCC 35678 / DSM 2160 / CIP 103997 / JCM 8858 / NBRC 14720 / NCIMB 2260 / Gabara) (Halobacterium pharaonis).